Reading from the N-terminus, the 286-residue chain is Phosphatidylserine decarboxylase proenzyme (286 aa).

Residues Asp90, His147, and Ser252 each act as charge relay system; for autoendoproteolytic cleavage activity in the active site. The Schiff-base intermediate with substrate; via pyruvic acid; for decarboxylase activity role is filled by Ser252. Ser252 carries the pyruvic acid (Ser); by autocatalysis modification.

The protein belongs to the phosphatidylserine decarboxylase family. PSD-B subfamily. Prokaryotic type I sub-subfamily. As to quaternary structure, heterodimer of a large membrane-associated beta subunit and a small pyruvoyl-containing alpha subunit. Requires pyruvate as cofactor. Is synthesized initially as an inactive proenzyme. Formation of the active enzyme involves a self-maturation process in which the active site pyruvoyl group is generated from an internal serine residue via an autocatalytic post-translational modification. Two non-identical subunits are generated from the proenzyme in this reaction, and the pyruvate is formed at the N-terminus of the alpha chain, which is derived from the carboxyl end of the proenzyme. The autoendoproteolytic cleavage occurs by a canonical serine protease mechanism, in which the side chain hydroxyl group of the serine supplies its oxygen atom to form the C-terminus of the beta chain, while the remainder of the serine residue undergoes an oxidative deamination to produce ammonia and the pyruvoyl prosthetic group on the alpha chain. During this reaction, the Ser that is part of the protease active site of the proenzyme becomes the pyruvoyl prosthetic group, which constitutes an essential element of the active site of the mature decarboxylase.

The protein resides in the cell membrane. The enzyme catalyses a 1,2-diacyl-sn-glycero-3-phospho-L-serine + H(+) = a 1,2-diacyl-sn-glycero-3-phosphoethanolamine + CO2. It participates in phospholipid metabolism; phosphatidylethanolamine biosynthesis; phosphatidylethanolamine from CDP-diacylglycerol: step 2/2. In terms of biological role, catalyzes the formation of phosphatidylethanolamine (PtdEtn) from phosphatidylserine (PtdSer). The protein is Phosphatidylserine decarboxylase proenzyme of Pseudomonas fluorescens (strain SBW25).